The sequence spans 2263 residues: MDYQEYQQFLARINTARDACVAKDIDVDLLMARHDYFGRELCKSLNIEYRNDVPFVDIILDIRPEVDPLTIDAPHITPDNYLYINNVLYIIDYKVSVSNESSVITYDKYYELTRDISDRLSIPIEIVIVRIDPVSKDLHINSDRFKELYPTIVVDINFNQFFDLKQLLYEKFGDDEEFLLKVAHGDFTLTAPWCKTGCPEFWKHPIYKEFKMSMPVPERRLFEESVKFNAYESERWNTNLVKIREYTKKDYSEHISKSAKNIFLASGFYKQPNKNEISEGWTLMVERVQDQREISKSLHDQKPSIHFIWGAHNPGNSNNATFKLILLSKSLQSIKGISTYTEAFKSLGKMMDIGDKAIEYEEFCMSLKSKARSSWKQIMNKKLEPKQINNALVLWEQQFMVNNDLIDKSEKLKLFKNFCGIGKHKQFKNKMLEDLEVSKPKILDFDDANMYLASLTMMEQSKKILSKSNGLKPDNFILNEFGSKIKDANKETYDNMHKIFETRYWQCISDFSTLMKNILSVSQYNRHNTFRIAMCANNNVFAIVFPSADIKTKKATVVYSIIVLHKEEENIFNPGCLHGTFKCMNGYISISRAIRLDKERCQRIVSSPGLFLTTCLLFKHDNPTLVMSDIMNFSIYTSLSITKSVLSLTEPARYMIMNSLAISSNVKDYIAEKFSPYTKTLFSVYMTRLIKNACFDAYDQRQRVQLRDIYLSDYDITQKGIKDNRELTSIWFPGSVTLKEYLTQIYLPFYFNAKGLHEKHHVMVDLAKTILEIECEQRENIKEIWSTNCTKQTVNLKILIHSLCKNLLADTSRHNHLRNRIENRNNFRRSITTISTFTSSKSCLKIGDFRKEKELQSVKQKKILEVQSRKMRLANPMFVTDEQVCLEVGHCNYEMLRNAMPNYTDYISTKVFDRLYELLDKGVLTDKPVIEQIMDMMVDHKKFYFTFFNKGQKTSKDREIFVGEYEAKMCMYAVERIAKERCKLNPDEMISEPGDGKLKVLEQKSEQEIRFLVETTRQKNREIDEAIEALAAEGYESNLEKIEKLSLGKAKGLKMEINADMSKWSAQDVFYKYFWLIALDPILYPQEKERILYFMCNYMDKELILPDELLFNLLDQKVAYQNDIIATMTNQLNSNTVLIKRNWLQGNFNYTSSYVHSCAMSVYKEILKEAITLLDGSILVNSLVHSDDNQTSITIVQDKMENDKIIDFAMKEFERACLTFGCQANMKKTYVTNCIKEFVSLFNLYGEPFSIYGRFLLTSVGDCAYIGPYEDLASRISSAQTAIKHGCPPSLAWVSIAISHWMTSLTYNMLPGQSNDPIDYFPAENRKDIPIELNGVLDAPLSMISTVGLESGNLYFLIKLLSKYTPVMQKRESVVNQIAEVKNWKVEDLTDNEIFRLKILRYLVLDAEMDPSDIMGETSDMRGRSILTPRKFTTAGSLRKLYSFSKYQDRLSSPGGMVELFTYLLEKPELLVTKGEDMKDYMESVIFRYNSKRFKESLSIQNPAQLFIEQILFSHKPIIDFSGIRDKYINLHDSRALEKEPDILGKVTFTEAYRLLMRDLSSLELTNDDIQVIYSYIILNDPMMITIANTHILSIYGSPQRRMGMSCSTMPEFRNLKLIHHSPALVLRAYSKNNPDIQGADPTEMARDLVHLKEFVENTNLEEKMKVRIAINEAEKGQRDIVFELKEMTRFYQVCYEYVKSTEHKIKVFILPTKSYTTTDFCSLMQGNLIKDKEWYTVHYLKQILSGGHKAIMQHNATSEQNIAFECFKLITHFADSFIDSLSRSAFLQLIIDEFSYKDVKVSKLYDIIKNGYNRTDFIPLLFRTGDLRQADLDKYDAMKSHERVTWNDWQTSRHLDMGSINLTITGYNRSITIIGEDNKLTYAELCLTRKTPENITISGRKLLGARHGLKFENMSKIQTYPGNYYITYRKKDRHQFVYQIHSHESITRRNEEHMAIRTRIYNEITPVCVVNVAEVDGDQRILIRSLDYLNNDIFSLSRIKVGLDEFATIKKAHFSKMVSFEGPPIKTGLLDLTELMKSQDLLNLNYDNIRNSNLISFSKLICCEGSDNINDGLEFLSDDPMNFTEGEAIHSTPIFNIYYSKRGERHMTYRNAIKLLIERETKIFEEAFTFSENGFISPENLGCLEAVVSLIKLLKTNEWSTVIDKCIHICLIKNGMDHMYHSFDVPKCFMGNPITRDMNWMMFREFINSLPGTDIPPWNVMTENFKKKCIALINSKLETQRDFSEFTKLMKKEGGRSNIEFD.

Positions 1–185 (MDYQEYQQFL…EEFLLKVAHG (185 aa)) are endonuclease. The Mn(2+) site is built by H34, D52, D79, D92, and Y93. Residues 1003 to 1033 (QKSEQEIRFLVETTRQKNREIDEAIEALAAE) are a coiled coil. Residues 1042 to 1230 (IEKLSLGKAK…GCQANMKKTY (189 aa)) form the RdRp catalytic domain. D1188 is a Mg(2+) binding site. Positions 1841–1977 (SHERVTWNDW…VCVVNVAEVD (137 aa)) are cap-binding. Positions 2064, 2169, 2178, and 2182 each coordinate Zn(2+).

Belongs to the Bunyavirales RNA polymerase family. Homomultimer. Interacts with the glycoprotein N; this interaction allows efficient polymerase packaging into virus particles. Interacts with nucleoprotein N. Mn(2+) serves as cofactor. Mg(2+) is required as a cofactor.

The protein resides in the host Golgi apparatus. It is found in the host endoplasmic reticulum. The protein localises to the host endoplasmic reticulum-Golgi intermediate compartment. Its subcellular location is the virion. It catalyses the reaction RNA(n) + a ribonucleoside 5'-triphosphate = RNA(n+1) + diphosphate. RNA-dependent RNA polymerase, which is responsible for the replication and transcription of the viral RNA genome using antigenomic RNA as an intermediate. During transcription, synthesizes subgenomic RNAs and assures their capping by a cap-snatching mechanism, which involves the endonuclease activity cleaving the host capped pre-mRNAs. These short capped RNAs are then used as primers for viral transcription. The 3'-end of subgenomic mRNAs molecules are not polyadenylated. During replication, the polymerase binds the 5' and 3' vRNA extremities at distinct sites. In turn, significant conformational changes occur in the polymerase and in vRNA to initiate active RNA synthesis. As a consequence of the use of the same enzyme for both transcription and replication, these mechanisms need to be well coordinated. This Cervidae (Deer) protein is RNA-directed RNA polymerase L (L).